The following is a 485-amino-acid chain: MKRKSERRSAWATAPPCSRRSSSSSPGVKKSRSSTPQELHRLEQQDDLYLDITDRLCFAILYSRPKSATNEHYFSIDNELEYENFYADFGPLNLAMVYRYCCKINKKLKSITMLRKKIIHFTGTDQRKQANAAFLVGCYMVIYLGRTPEDAYRTLIFGDTAYIPFRDAAYGSCSFYITLLDCFHAVKKAMQYGFFNFNSFNLDEYEHYEKAENGDFNWIIPERFLAFCGPHSRSRLESGYHQHSPETYIPYFKNHNVTTIIRLNKRMYDAKRFTDAGFDHHDLFFPDGSTPAESIVQEFLDICENVKGAIAVHCKAGLGRTGTLIGCYLMKHYRMTAAESIAWLRICRPGSVIGPQQQFLVMKQSSLWLEGDYFRQKLRGQENGPLREAFSKHLSDADDLSLNGLENQDNQEPEPYSDDDEVSGMTQGDRLRALKSRRQPKASAIPLTCPLAVLTSALCSVAIWWIVCDYILPTLLFCLDGFRTQ.

The segment at 1-38 is disordered; the sequence is MKRKSERRSAWATAPPCSRRSSSSSPGVKKSRSSTPQE. Residues 1 to 54 carry the Nucleolar localization signal motif; that stretch reads MKRKSERRSAWATAPPCSRRSSSSSPGVKKSRSSTPQELHRLEQQDDLYLDITD. Residues 15–28 show a composition bias toward low complexity; sequence PPCSRRSSSSSPGV. Residues 44–198 are a; it reads QQDDLYLDIT…AMQYGFFNFN (155 aa). The tract at residues 199–212 is linker; the sequence is SFNLDEYEHYEKAE. Residues 213–379 are b; sequence NGDFNWIIPE…EGDYFRQKLR (167 aa). The Tyrosine-protein phosphatase domain occupies 215–374; sequence DFNWIIPERF…SSLWLEGDYF (160 aa). Cys314 (phosphocysteine intermediate) is an active-site residue. The segment at 402–424 is disordered; that stretch reads LNGLENQDNQEPEPYSDDDEVSG. Residues 409-422 show a composition bias toward acidic residues; it reads DNQEPEPYSDDDEV.

The protein belongs to the protein-tyrosine phosphatase family. Non-receptor class CDC14 subfamily. In terms of assembly, interacts with FZR1/CDH1.

The protein resides in the nucleus. The protein localises to the nucleolus. It localises to the nucleoplasm. The enzyme catalyses O-phospho-L-tyrosyl-[protein] + H2O = L-tyrosyl-[protein] + phosphate. It catalyses the reaction O-phospho-L-seryl-[protein] + H2O = L-seryl-[protein] + phosphate. It carries out the reaction O-phospho-L-threonyl-[protein] + H2O = L-threonyl-[protein] + phosphate. Its function is as follows. Dual-specificity phosphatase involved in DNA damage response. Essential regulator of the G2 DNA damage checkpoint: following DNA damage, translocates to the nucleus and dephosphorylates FZR1/CDH1, a key activator of the anaphase promoting complex/cyclosome (APC/C). Dephosphorylates SIRT2 around early anaphase. Dephosphorylation of FZR1/CDH1 activates the APC/C, leading to the ubiquitination of PLK1, preventing entry into mitosis. Preferentially dephosphorylates proteins modified by proline-directed kinases. This is Dual specificity protein phosphatase CDC14B (Cdc14b) from Mus musculus (Mouse).